A 397-amino-acid polypeptide reads, in one-letter code: Exodeoxyribonuclease 7 large subunit (397 aa).

The protein belongs to the XseA family. In terms of assembly, heterooligomer composed of large and small subunits.

It is found in the cytoplasm. It carries out the reaction Exonucleolytic cleavage in either 5'- to 3'- or 3'- to 5'-direction to yield nucleoside 5'-phosphates.. Its function is as follows. Bidirectionally degrades single-stranded DNA into large acid-insoluble oligonucleotides, which are then degraded further into small acid-soluble oligonucleotides. The sequence is that of Exodeoxyribonuclease 7 large subunit from Anaplasma marginale (strain Florida).